Consider the following 207-residue polypeptide: Large ribosomal subunit protein uL4 (207 aa).

Positions 44-77 (RRQGTHDTKTRSEVRGGGRKPWRQKGTGRARHGT) are disordered. Over residues 47 to 59 (GTHDTKTRSEVRG) the composition is skewed to basic and acidic residues. A compositionally biased stretch (basic residues) spans 60-77 (GGRKPWRQKGTGRARHGT).

This sequence belongs to the universal ribosomal protein uL4 family. In terms of assembly, part of the 50S ribosomal subunit.

Its function is as follows. One of the primary rRNA binding proteins, this protein initially binds near the 5'-end of the 23S rRNA. It is important during the early stages of 50S assembly. It makes multiple contacts with different domains of the 23S rRNA in the assembled 50S subunit and ribosome. Functionally, forms part of the polypeptide exit tunnel. This chain is Large ribosomal subunit protein uL4, found in Desulforudis audaxviator (strain MP104C).